The primary structure comprises 365 residues: Anhydro-N-acetylmuramic acid kinase (365 aa).

Position 9–16 (9–16 (GTSLDGVD)) interacts with ATP.

Belongs to the anhydro-N-acetylmuramic acid kinase family.

The enzyme catalyses 1,6-anhydro-N-acetyl-beta-muramate + ATP + H2O = N-acetyl-D-muramate 6-phosphate + ADP + H(+). The protein operates within amino-sugar metabolism; 1,6-anhydro-N-acetylmuramate degradation. It participates in cell wall biogenesis; peptidoglycan recycling. Functionally, catalyzes the specific phosphorylation of 1,6-anhydro-N-acetylmuramic acid (anhMurNAc) with the simultaneous cleavage of the 1,6-anhydro ring, generating MurNAc-6-P. Is required for the utilization of anhMurNAc either imported from the medium or derived from its own cell wall murein, and thus plays a role in cell wall recycling. The sequence is that of Anhydro-N-acetylmuramic acid kinase from Rhodopseudomonas palustris (strain BisB18).